A 210-amino-acid chain; its full sequence is Probable molybdenum cofactor guanylyltransferase (210 aa).

GTP contacts are provided by residues 18–20 (LAG), lysine 31, asparagine 59, aspartate 86, and aspartate 111. Aspartate 111 lines the Mg(2+) pocket.

The protein belongs to the MobA family. Mg(2+) is required as a cofactor.

Its subcellular location is the cytoplasm. It carries out the reaction Mo-molybdopterin + GTP + H(+) = Mo-molybdopterin guanine dinucleotide + diphosphate. Its function is as follows. Transfers a GMP moiety from GTP to Mo-molybdopterin (Mo-MPT) cofactor (Moco or molybdenum cofactor) to form Mo-molybdopterin guanine dinucleotide (Mo-MGD) cofactor. This is Probable molybdenum cofactor guanylyltransferase (nasC) from Haloferax mediterranei (strain ATCC 33500 / DSM 1411 / JCM 8866 / NBRC 14739 / NCIMB 2177 / R-4) (Halobacterium mediterranei).